Here is a 132-residue protein sequence, read N- to C-terminus: Small ribosomal subunit protein uS11c (132 aa).

Belongs to the universal ribosomal protein uS11 family. In terms of assembly, part of the 30S ribosomal subunit.

Its subcellular location is the plastid. It is found in the chloroplast. The sequence is that of Small ribosomal subunit protein uS11c from Gnetum parvifolium (Small-leaved jointfir).